A 102-amino-acid polypeptide reads, in one-letter code: Large ribosomal subunit protein bL28 (102 aa).

The disordered stretch occupies residues 1-20 (MSRRCELTAKGPQVGHKVSH).

It belongs to the bacterial ribosomal protein bL28 family.

This is Large ribosomal subunit protein bL28 from Bradyrhizobium sp. (strain BTAi1 / ATCC BAA-1182).